A 135-amino-acid polypeptide reads, in one-letter code: Mini-ribonuclease 3 (135 aa).

Asp-19 is a catalytic residue.

Belongs to the MrnC RNase family. Homodimer. Requires Mg(2+) as cofactor.

The protein localises to the cytoplasm. Involved in correct processing of both the 5' and 3' ends of 23S rRNA precursor. Processes 30S rRNA precursor transcript even in absence of ribonuclease 3 (Rnc); Rnc processes 30S rRNA into smaller rRNA precursors. This chain is Mini-ribonuclease 3, found in Gloeobacter violaceus (strain ATCC 29082 / PCC 7421).